The chain runs to 794 residues: E3 ubiquitin-protein ligase wwp-1 (794 aa).

Residues 1–16 are compositionally biased toward low complexity; that stretch reads MARNEPSSQQPSSSGS. Disordered regions lie at residues 1–31 and 155–198; these read MARN…KPSK and RSAG…AAPT. Positions 10-124 constitute a C2 domain; sequence QPSSSGSNGT…TRNENGEFKN (115 aa). Over residues 17–27 the composition is skewed to polar residues; sequence NGTPAQQNGSA. A compositionally biased stretch (low complexity) spans 161–186; the sequence is AETAASASSEASTSNGVATSSSARRP. WW domains follow at residues 219–252, 253–286, 324–358, and 366–399; these read EQLP…RPST, QPLP…RPTA, GPLP…DPRT, and QPLP…DPRT. Positions 460-794 constitute an HECT domain; that stretch reads NAVDLRRRLY…IEMTEGFGNE (335 aa). The Glycyl thioester intermediate role is filled by Cys762.

In terms of assembly, interacts (via WW domains) with Kruppel-like factor klf-1. Interacts with ubiquitin-conjugating enzyme E2 ubc-18. Expressed in neurons localized in the head and tail of adults.

The catalysed reaction is S-ubiquitinyl-[E2 ubiquitin-conjugating enzyme]-L-cysteine + [acceptor protein]-L-lysine = [E2 ubiquitin-conjugating enzyme]-L-cysteine + N(6)-ubiquitinyl-[acceptor protein]-L-lysine.. Its pathway is protein modification; protein ubiquitination. Functionally, E3 ubiquitin-protein ligase which accepts ubiquitin from an E2 ubiquitin-conjugating enzyme in the form of a thioester and then directly transfers the ubiquitin to targeted substrates. Ubiquitinates klf-1. Required for diet restriction-mediated lifespan extension, acting in concert with Kruppel-like factor klf-1 in the intestine to perhaps modulate genes involved in lipid metabolism. Probably acting downstream of the Insulin/IGF-1-like signaling (IIS) mediated pathway, plays a role in the immune response to infection by the Gram-negative bacterium P.aeruginosa, at least partly in response to bacterial pore-forming toxins. In Caenorhabditis elegans, this protein is E3 ubiquitin-protein ligase wwp-1.